The primary structure comprises 561 residues: Mercuric reductase (561 aa).

One can recognise an HMA domain in the interval 1–65; it reads MTTLKITGMT…AVAGLGYEAT (65 aa). Cys11 and Cys14 together coordinate a metal cation. FAD is bound by residues Ala110, Gly130, and Thr135. Cys136 and Cys141 are disulfide-bonded. Lys145, Ala211, Asp403, and Val411 together coordinate FAD. Hg(2+)-binding residues include Cys558 and Cys559.

The protein belongs to the class-I pyridine nucleotide-disulfide oxidoreductase family. In terms of assembly, homodimer. The cofactor is FAD.

The catalysed reaction is Hg + NADP(+) + H(+) = Hg(2+) + NADPH. Its function is as follows. Resistance to Hg(2+) in bacteria appears to be governed by a specialized system which includes mercuric reductase. MerA protein is responsible for volatilizing mercury as Hg(0). In Enterobacter agglomerans (Erwinia herbicola), this protein is Mercuric reductase (merA).